A 443-amino-acid polypeptide reads, in one-letter code: ATP-dependent protease ATPase subunit HslU (443 aa).

Residues isoleucine 18, 60 to 65, aspartate 256, glutamate 321, and arginine 393 each bind ATP; that span reads GVGKTE.

Belongs to the ClpX chaperone family. HslU subfamily. A double ring-shaped homohexamer of HslV is capped on each side by a ring-shaped HslU homohexamer. The assembly of the HslU/HslV complex is dependent on binding of ATP.

It is found in the cytoplasm. Functionally, ATPase subunit of a proteasome-like degradation complex; this subunit has chaperone activity. The binding of ATP and its subsequent hydrolysis by HslU are essential for unfolding of protein substrates subsequently hydrolyzed by HslV. HslU recognizes the N-terminal part of its protein substrates and unfolds these before they are guided to HslV for hydrolysis. The polypeptide is ATP-dependent protease ATPase subunit HslU (Vibrio parahaemolyticus serotype O3:K6 (strain RIMD 2210633)).